The sequence spans 156 residues: ATP synthase subunit b (156 aa).

The helical transmembrane segment at 7-29 threads the bilayer; that stretch reads LFGQTVAFILFVWFCMKFVWPPL.

This sequence belongs to the ATPase B chain family. In terms of assembly, F-type ATPases have 2 components, F(1) - the catalytic core - and F(0) - the membrane proton channel. F(1) has five subunits: alpha(3), beta(3), gamma(1), delta(1), epsilon(1). F(0) has three main subunits: a(1), b(2) and c(10-14). The alpha and beta chains form an alternating ring which encloses part of the gamma chain. F(1) is attached to F(0) by a central stalk formed by the gamma and epsilon chains, while a peripheral stalk is formed by the delta and b chains.

The protein localises to the cell inner membrane. Functionally, f(1)F(0) ATP synthase produces ATP from ADP in the presence of a proton or sodium gradient. F-type ATPases consist of two structural domains, F(1) containing the extramembraneous catalytic core and F(0) containing the membrane proton channel, linked together by a central stalk and a peripheral stalk. During catalysis, ATP synthesis in the catalytic domain of F(1) is coupled via a rotary mechanism of the central stalk subunits to proton translocation. Component of the F(0) channel, it forms part of the peripheral stalk, linking F(1) to F(0). In Shewanella frigidimarina (strain NCIMB 400), this protein is ATP synthase subunit b.